The primary structure comprises 299 residues: MTQPEPLVITLLGPTASGKTALSLEIAERLNLPVINVDSRQLYREMTVGTAKPTAEQRARVPHHLLDLRNPDQPITLQEFQAEAEPCIQRELQSRGMALLVGGSGLYLKALTSGLKPPAVPPQAQLREQLSQLGQAICHPLLQQADPTAGAKIAPADAVRTQRALEVLYATGRPMSSQATATPPPWRVLELGLDPANLRQRIQQRTDQLYSDGLVEETRQLSERYGADLPLLQTIGYGEALQLLEGTMNQAKANRITTQRTRQFAKRQRTWFRRQHQPHWLAPATELDQAMTLIEQHLR.

13 to 20 (GPTASGKT) contacts ATP. Residue 15–20 (TASGKT) participates in substrate binding. The segment at 38-41 (DSRQ) is interaction with substrate tRNA.

It belongs to the IPP transferase family. In terms of assembly, monomer. The cofactor is Mg(2+).

It catalyses the reaction adenosine(37) in tRNA + dimethylallyl diphosphate = N(6)-dimethylallyladenosine(37) in tRNA + diphosphate. Its function is as follows. Catalyzes the transfer of a dimethylallyl group onto the adenine at position 37 in tRNAs that read codons beginning with uridine, leading to the formation of N6-(dimethylallyl)adenosine (i(6)A). In Parasynechococcus marenigrum (strain WH8102), this protein is tRNA dimethylallyltransferase.